Consider the following 380-residue polypeptide: Enoyl-[acyl-carrier-protein] reductase, mitochondrial (380 aa).

A mitochondrion-targeting transit peptide spans 1-9 (MLPTFKRYM). Tyr73 (proton donor) is an active-site residue. Residues Asn157, 185–188 (TSSV), 208–210 (RDR), 283–286 (YGGM), and 308–310 (YWV) contribute to the NADP(+) site. Phosphoserine is present on Ser339. Residue Lys373 participates in NADP(+) binding.

This sequence belongs to the zinc-containing alcohol dehydrogenase family. Quinone oxidoreductase subfamily. As to quaternary structure, homodimer or in a complex with other proteins. Interacts with ARS1.

The protein resides in the mitochondrion matrix. It carries out the reaction a 2,3-saturated acyl-[ACP] + NADP(+) = a (2E)-enoyl-[ACP] + NADPH + H(+). The catalysed reaction is (2E,4E)-hexadienoyl-CoA + NADPH + H(+) = (4E)-hexenoyl-CoA + NADP(+). The enzyme catalyses (2E)-hexenoyl-CoA + NADPH + H(+) = hexanoyl-CoA + NADP(+). Its function is as follows. Catalyzes the NADPH-dependent reduction of trans-2-enoyl thioesters in mitochondrial fatty acid synthesis (fatty acid synthesis type II). Fatty acid chain elongation in mitochondria uses acyl carrier protein (ACP) as an acyl group carrier, but the enzyme accepts both ACP and CoA thioesters as substrates in vitro. Required for respiration and the maintenance of the mitochondrial compartment. This chain is Enoyl-[acyl-carrier-protein] reductase, mitochondrial (ETR1), found in Saccharomyces cerevisiae (strain ATCC 204508 / S288c) (Baker's yeast).